The sequence spans 227 residues: Adapter protein MecA 1 (227 aa).

Belongs to the MecA family. In terms of assembly, homodimer.

Its function is as follows. Enables the recognition and targeting of unfolded and aggregated proteins to the ClpC protease or to other proteins involved in proteolysis. Acts negatively in the development of competence by binding ComK and recruiting it to the ClpCP protease. When overexpressed, inhibits sporulation. Also involved in Spx degradation by ClpC. In Bacillus cereus (strain ATCC 14579 / DSM 31 / CCUG 7414 / JCM 2152 / NBRC 15305 / NCIMB 9373 / NCTC 2599 / NRRL B-3711), this protein is Adapter protein MecA 1 (mecA1).